Here is a 222-residue protein sequence, read N- to C-terminus: Uridine diphosphate glucose pyrophosphatase NUDT14 (222 aa).

Residues 38–206 (KTHDSVTILM…DVPKTLGVIF (169 aa)) enclose the Nudix hydrolase domain. Residues 111 to 129 (PGLSLEEVACKEAWEECGY) carry the Nudix box motif.

Belongs to the Nudix hydrolase family. In terms of assembly, homodimer. Mg(2+) is required as a cofactor.

The protein resides in the cytoplasm. It carries out the reaction UDP-sugar + H2O = UMP + alpha-D-aldose 1-phosphate.. In terms of biological role, hydrolyzes UDP-glucose to glucose 1-phosphate and UMP and ADP-ribose to ribose 5-phosphate and AMP. The physiological substrate is probably UDP-glucose. Poor activity on other substrates such as ADP-glucose, CDP-glucose, GDP-glucose and GDP-mannose. In Bos taurus (Bovine), this protein is Uridine diphosphate glucose pyrophosphatase NUDT14 (NUDT14).